A 283-amino-acid polypeptide reads, in one-letter code: Orotidine 5'-phosphate decarboxylase (283 aa).

Catalysis depends on lysine 97, which acts as the Proton donor.

It belongs to the OMP decarboxylase family. Type 2 subfamily.

The enzyme catalyses orotidine 5'-phosphate + H(+) = UMP + CO2. The protein operates within pyrimidine metabolism; UMP biosynthesis via de novo pathway; UMP from orotate: step 2/2. The chain is Orotidine 5'-phosphate decarboxylase from Clostridium botulinum (strain Loch Maree / Type A3).